A 273-amino-acid polypeptide reads, in one-letter code: HLA class II histocompatibility antigen, DO beta chain (273 aa).

The signal sequence occupies residues Met-1–Gly-26. The tract at residues Thr-27–Lys-120 is beta-1. Residues Thr-27–Lys-224 lie on the Extracellular side of the membrane. 2 disulfides stabilise this stretch: Cys-41-Cys-105 and Cys-143-Cys-199. Residue Asn-45 is glycosylated (N-linked (GlcNAc...) asparagine). Residues Val-121–Trp-214 are beta-2. In terms of domain architecture, Ig-like C1-type spans Pro-123–Glu-213. The tract at residues Arg-215–Lys-224 is connecting peptide. The helical transmembrane segment at Met-225 to Ile-245 threads the bilayer. Over Gln-246–Cys-273 the chain is Cytoplasmic.

Belongs to the MHC class II family. Heterodimer of an alpha chain (DOA) and a beta chain (DOB). Forms a heterotetrameric complex with an HLA-DM molecule during intracellular transport in endosomal/lysosomal compartments in B-cells.

The protein localises to the endosome membrane. The protein resides in the lysosome membrane. Important modulator in the HLA class II restricted antigen presentation pathway by interaction with the HLA-DM molecule in B-cells. Modifies peptide exchange activity of HLA-DM. The polypeptide is HLA class II histocompatibility antigen, DO beta chain (HLA-DOB) (Homo sapiens (Human)).